Reading from the N-terminus, the 521-residue chain is Myocyte-specific enhancer factor 2D (521 aa).

The MADS-box domain maps to 3–57; sequence RKKIQIQRITDERNRQVTFTKRKFGLMKKAYELSVLCDCEIALIIFNHSNKLFQY. Residues 58–86 constitute a DNA-binding region (mef2-type); it reads ASTDMDKVLLKYTEYNEPHESRTNADIIE. Phosphoserine is present on residues S98, S106, and S110. A Phosphoserine; by PKA modification is found at S121. Positions 174–207 are disordered; that stretch reads TDPRLLSPQQPALQRNSVSPGLPQRPASAGAMLG. S180 is modified (phosphoserine; by MAPK7). Over residues 180–192 the composition is skewed to polar residues; sequence SPQQPALQRNSVS. At S190 the chain carries Phosphoserine; by PKA. The residue at position 231 (S231) is a Phosphoserine. The tract at residues 244 to 266 is disordered; sequence NKVIPAKSPPPPTHSTQLGAPSR. N6-acetyllysine is present on K245. At S251 the chain carries Phosphoserine. The beta domain stretch occupies residues 286 to 292; that stretch reads TEDHLDL. Disordered stretches follow at residues 357 to 407 and 437 to 521; these read SLGN…QSHL and SIKS…WTLK. The segment covering 373–400 has biased composition (pro residues); that stretch reads PQQPQPPQQQPPQPQQPQPQQPQQPQQP. An N6-acetyllysine; alternate modification is found at K439. Residue K439 forms a Glycyl lysine isopeptide (Lys-Gly) (interchain with G-Cter in SUMO); alternate linkage. S444 carries the post-translational modification Phosphoserine.

The protein belongs to the MEF2 family. Interacts with MYOG. Forms a complex with class II HDACs in undifferentiating cells. On myogenic differentiation, HDACs are released into the cytoplasm allowing MEF2s to interact with other proteins for activation. Interacts with HDAC4 (in undifferentiating cells); the interaction translocates MEF2D to nuclear dots. Forms a heterodimer with MEF2A. Interacts with MAPK7; the interaction phosphorylates but does not activate MEF2D. Interacts with CCAR2 and HDAC3. Phosphorylated on Ser-444 by CDK5 is required for Lys-439 sumoylation and inhibits transcriptional activity. In neurons, enhanced CDK5 activity induced by neurotoxins promotes caspase 3-mediated cleavage leading to neuron apoptosis. Phosphorylation on Ser-180 can be enhanced by EGF. Phosphorylated and activated by CaMK4. In terms of processing, acetylated on Lys-439 by CREBBP. Acetylated by EP300. Deacetylated by SIRT1 and HDAC3. Post-translationally, sumoylated on Lys-439 with SUMO2 but not SUMO1; which inhibits transcriptional activity and myogenic activity. Desumoylated by SENP3. Proteolytically cleaved in cerebellar granule neurons on several sites by caspase 7 following neurotoxicity. Preferentially cleaves the CDK5-mediated hyperphosphorylated form which leads to neuron apoptosis and transcriptional inactivation.

It is found in the nucleus. Its function is as follows. Transcriptional activator which binds specifically to the MEF2 element, 5'-YTA[AT](4)TAR-3', found in numerous muscle-specific, growth factor- and stress-induced genes. Mediates cellular functions not only in skeletal and cardiac muscle development, but also in neuronal differentiation and survival. Plays diverse roles in the control of cell growth, survival and apoptosis via p38 MAPK signaling in muscle-specific and/or growth factor-related transcription. Plays a critical role in the regulation of neuronal apoptosis. In Homo sapiens (Human), this protein is Myocyte-specific enhancer factor 2D (MEF2D).